We begin with the raw amino-acid sequence, 200 residues long: MGHVTDIRSNSQGFNLTDSVYERLLSERIIFLGSEVNDNIANRLCAQILLLAAEDAFKDISLYINSPGGSISAGMAIYDTMVLAPCDIATYAMGMAASMGEFLLAAGTRGKRYALPHARILMHQPLGGVTGSAADIAIQAEQFAVIKKEMFRLNAEFTGQPIERIEADSDRDRWFTASEALEYGFVDHIITRAHVNGEVQ.

The active-site Nucleophile is the S98. H123 is a catalytic residue.

Belongs to the peptidase S14 family. In terms of assembly, fourteen ClpP subunits assemble into 2 heptameric rings which stack back to back to give a disk-like structure with a central cavity, resembling the structure of eukaryotic proteasomes.

The protein resides in the cytoplasm. It catalyses the reaction Hydrolysis of proteins to small peptides in the presence of ATP and magnesium. alpha-casein is the usual test substrate. In the absence of ATP, only oligopeptides shorter than five residues are hydrolyzed (such as succinyl-Leu-Tyr-|-NHMec, and Leu-Tyr-Leu-|-Tyr-Trp, in which cleavage of the -Tyr-|-Leu- and -Tyr-|-Trp bonds also occurs).. Its function is as follows. Cleaves peptides in various proteins in a process that requires ATP hydrolysis. Has a chymotrypsin-like activity. Plays a major role in the degradation of misfolded proteins. In Mycobacterium leprae (strain TN), this protein is ATP-dependent Clp protease proteolytic subunit 1.